Here is a 267-residue protein sequence, read N- to C-terminus: Large ribosomal subunit protein bL9m (267 aa).

The transit peptide at 1–52 (MAALVVTEPGRALLRAGTERLLRGGIQELLRPRHEGNSPGLARDFSLSQNRG) directs the protein to the mitochondrion.

The protein belongs to the bacterial ribosomal protein bL9 family. Component of the mitochondrial ribosome large subunit (39S) which comprises a 16S rRNA and about 50 distinct proteins.

The protein resides in the mitochondrion. This Papio anubis (Olive baboon) protein is Large ribosomal subunit protein bL9m (MRPL9).